The primary structure comprises 187 residues: Casparian strip membrane protein 5 (187 aa).

Residues Met-1–Arg-24 lie on the Cytoplasmic side of the membrane. Residues Ile-25 to Ile-45 traverse the membrane as a helical segment. The Extracellular segment spans residues Leu-46–Thr-74. Residues Phe-75–Phe-95 form a helical membrane-spanning segment. Topologically, residues Val-96–Arg-107 are cytoplasmic. A helical membrane pass occupies residues Ile-108–Ala-128. The Extracellular portion of the chain corresponds to Ala-129–Ser-161. Asn-140 is a glycosylation site (N-linked (GlcNAc...) asparagine). Residues Leu-162–Ala-182 traverse the membrane as a helical segment. Over Leu-183–His-187 the chain is Cytoplasmic.

This sequence belongs to the Casparian strip membrane proteins (CASP) family. In terms of assembly, homodimer and heterodimers.

Its subcellular location is the cell membrane. Its function is as follows. Regulates membrane-cell wall junctions and localized cell wall deposition. Required for establishment of the Casparian strip membrane domain (CSD) and the subsequent formation of Casparian strips, a cell wall modification of the root endodermis that determines an apoplastic barrier between the intraorganismal apoplasm and the extraorganismal apoplasm and prevents lateral diffusion. The chain is Casparian strip membrane protein 5 from Arabidopsis lyrata subsp. lyrata (Lyre-leaved rock-cress).